A 409-amino-acid polypeptide reads, in one-letter code: Arginine deiminase (409 aa).

The active-site Amidino-cysteine intermediate is the C399.

This sequence belongs to the arginine deiminase family.

The protein resides in the cytoplasm. The catalysed reaction is L-arginine + H2O = L-citrulline + NH4(+). It functions in the pathway amino-acid degradation; L-arginine degradation via ADI pathway; carbamoyl phosphate from L-arginine: step 1/2. The chain is Arginine deiminase from Streptococcus sanguinis (strain SK36).